Here is a 270-residue protein sequence, read N- to C-terminus: Putative carboxymethylenebutenolidase (270 aa).

Catalysis depends on residues C147, D204, and H236.

This sequence belongs to the dienelactone hydrolase family.

It carries out the reaction 2-(5-oxo-2,5-dihydrofuran-2-ylidene)acetate + H2O = 4-oxohex-2-enedioate + H(+). This chain is Putative carboxymethylenebutenolidase (ysgA), found in Salmonella typhi.